The sequence spans 483 residues: Probable cytosol aminopeptidase (483 aa).

Mn(2+) contacts are provided by lysine 252 and aspartate 257. The active site involves lysine 264. Mn(2+) is bound by residues aspartate 275, aspartate 334, and glutamate 336. Arginine 338 is a catalytic residue.

It belongs to the peptidase M17 family. Mn(2+) is required as a cofactor.

The protein resides in the cytoplasm. The enzyme catalyses Release of an N-terminal amino acid, Xaa-|-Yaa-, in which Xaa is preferably Leu, but may be other amino acids including Pro although not Arg or Lys, and Yaa may be Pro. Amino acid amides and methyl esters are also readily hydrolyzed, but rates on arylamides are exceedingly low.. The catalysed reaction is Release of an N-terminal amino acid, preferentially leucine, but not glutamic or aspartic acids.. Its function is as follows. Presumably involved in the processing and regular turnover of intracellular proteins. Catalyzes the removal of unsubstituted N-terminal amino acids from various peptides. The polypeptide is Probable cytosol aminopeptidase (Legionella pneumophila (strain Corby)).